The sequence spans 118 residues: V-type proton ATPase subunit G 2 (118 aa).

Positions 8–57 (IQQLLQAEKRAAEKVADARKRKARRLKQAKEEAQMEVDQYRREREQEFQS) form a coiled coil. The tract at residues 25 to 90 (ARKRKARRLK…VQGMQSSQQR (66 aa)) is disordered. Residues 35–55 (QAKEEAQMEVDQYRREREQEF) are compositionally biased toward basic and acidic residues. Composition is skewed to polar residues over residues 56-69 (QSKQ…QGNL) and 78-89 (RRQVQGMQSSQQ).

This sequence belongs to the V-ATPase G subunit family. V-ATPase is a heteromultimeric enzyme made up of two complexes: the ATP-hydrolytic V1 complex and the proton translocation V0 complex. The V1 complex consists of three catalytic AB heterodimers that form a heterohexamer, three peripheral stalks each consisting of EG heterodimers, one central rotor including subunits D and F, and the regulatory subunits C and H. The proton translocation complex V0 consists of the proton transport subunit a, a ring of proteolipid subunits c9c'', rotary subunit d, subunits e and f, and the accessory subunits ATP6AP1/Ac45 and ATP6AP2/PRR. In terms of tissue distribution, expressed in brain (at protein level).

It localises to the melanosome. Its subcellular location is the cytoplasmic vesicle. The protein localises to the clathrin-coated vesicle membrane. Subunit of the V1 complex of vacuolar(H+)-ATPase (V-ATPase), a multisubunit enzyme composed of a peripheral complex (V1) that hydrolyzes ATP and a membrane integral complex (V0) that translocates protons. V-ATPase is responsible for acidifying and maintaining the pH of intracellular compartments and in some cell types, is targeted to the plasma membrane, where it is responsible for acidifying the extracellular environment. The protein is V-type proton ATPase subunit G 2 of Bos taurus (Bovine).